We begin with the raw amino-acid sequence, 119 residues long: Type II secretion system protein I (119 aa).

The propeptide at 1-5 is leader sequence; that stretch reads MNARG. Position 6 is an N-methylmethionine (Met-6). The helical transmembrane segment at 6–26 threads the bilayer; sequence MTLLEVMVALAVFAIAGLAVM.

Belongs to the GSP I family. In terms of assembly, type II secretion is composed of four main components: the outer membrane complex, the inner membrane complex, the cytoplasmic secretion ATPase and the periplasm-spanning pseudopilus. Interacts with core component ExeG. In terms of processing, cleaved by prepilin peptidase. Methylated by prepilin peptidase at the amino group of the N-terminal methionine once the leader sequence is cleaved by prepilin peptidase.

The protein localises to the cell inner membrane. Functionally, component of the type II secretion system required for the energy-dependent secretion of extracellular factors such as proteases and toxins from the periplasm. Part of the pseudopilus tip complex that is critical for the recognition and binding of secretion substrates. This Aeromonas hydrophila protein is Type II secretion system protein I (exeI).